We begin with the raw amino-acid sequence, 209 residues long: Orotate phosphoribosyltransferase (209 aa).

5-phospho-alpha-D-ribose 1-diphosphate is bound by residues Arg-96, Lys-100, His-102, and 122–130 (EDLISTGGS). Ser-126 serves as a coordination point for orotate.

It belongs to the purine/pyrimidine phosphoribosyltransferase family. PyrE subfamily. As to quaternary structure, homodimer. Mg(2+) serves as cofactor.

The enzyme catalyses orotidine 5'-phosphate + diphosphate = orotate + 5-phospho-alpha-D-ribose 1-diphosphate. The protein operates within pyrimidine metabolism; UMP biosynthesis via de novo pathway; UMP from orotate: step 1/2. Functionally, catalyzes the transfer of a ribosyl phosphate group from 5-phosphoribose 1-diphosphate to orotate, leading to the formation of orotidine monophosphate (OMP). This is Orotate phosphoribosyltransferase from Streptococcus pyogenes serotype M3 (strain ATCC BAA-595 / MGAS315).